The chain runs to 98 residues: DNA-binding protein Fis (98 aa).

Residues 74–93 (QTRAATMLGINRGTLRKKLK) constitute a DNA-binding region (H-T-H motif).

Belongs to the transcriptional regulatory Fis family. In terms of assembly, homodimer.

Its function is as follows. Activates ribosomal RNA transcription. Plays a direct role in upstream activation of rRNA promoters. The chain is DNA-binding protein Fis from Histophilus somni (strain 2336) (Haemophilus somnus).